The sequence spans 1084 residues: Autophagy-related protein 11 (1084 aa).

2 coiled-coil regions span residues 585-739 (VQNL…LTES) and 847-879 (VIRR…TNDK). 2 disordered regions span residues 925 to 961 (SMIP…NMNR) and 973 to 1007 (NIGS…STNA). Low complexity-rich tracts occupy residues 940-949 (SNTNNSNPSS) and 973-993 (NIGS…NGNN). The span at 994–1007 (KPETNIDTTSSTNA) shows a compositional bias: polar residues.

Belongs to the ATG11 family. In terms of assembly, homodimer and potential homooligomers. Interacts with ATG1 kinase and the ATG19 and ATG34 cargo protein transporters. Interacts with ATG9, ATG17 and ATG20.

It is found in the preautophagosomal structure membrane. The protein resides in the vacuole membrane. In terms of biological role, involved in cytoplasm to vacuole transport (Cvt), pexophagy, mitophagy and nucleophagy. Recruits mitochondria for their selective degradation via autophagy (mitophagy) during starvation, through its interaction with ATG32. Works as scaffold proteins that recruit ATG proteins to the pre-autophagosome (PAS), the site of vesicle/autophagosome formation. Required for ATG9 anterograde transport from the mitochondria to the PAS. Also recruits the ATG19-prAPE1 complex to the PAS. Required for the Cvt vesicles completion. In Kluyveromyces marxianus (strain DMKU3-1042 / BCC 29191 / NBRC 104275) (Yeast), this protein is Autophagy-related protein 11.